Reading from the N-terminus, the 255-residue chain is Leucyl/phenylalanyl-tRNA--protein transferase (255 aa).

Belongs to the L/F-transferase family.

The protein localises to the cytoplasm. The catalysed reaction is N-terminal L-lysyl-[protein] + L-leucyl-tRNA(Leu) = N-terminal L-leucyl-L-lysyl-[protein] + tRNA(Leu) + H(+). The enzyme catalyses N-terminal L-arginyl-[protein] + L-leucyl-tRNA(Leu) = N-terminal L-leucyl-L-arginyl-[protein] + tRNA(Leu) + H(+). It catalyses the reaction L-phenylalanyl-tRNA(Phe) + an N-terminal L-alpha-aminoacyl-[protein] = an N-terminal L-phenylalanyl-L-alpha-aminoacyl-[protein] + tRNA(Phe). Its function is as follows. Functions in the N-end rule pathway of protein degradation where it conjugates Leu, Phe and, less efficiently, Met from aminoacyl-tRNAs to the N-termini of proteins containing an N-terminal arginine or lysine. This is Leucyl/phenylalanyl-tRNA--protein transferase from Burkholderia pseudomallei (strain 1106a).